We begin with the raw amino-acid sequence, 402 residues long: Probable tRNA sulfurtransferase (402 aa).

Residues 61–166 (EEIMKRISKV…SDAAYLYSRV (106 aa)) form the THUMP domain. ATP is bound by residues 184–185 (ML), 209–210 (HF), Arg266, Gly288, and Gln297.

It belongs to the ThiI family.

The protein resides in the cytoplasm. The catalysed reaction is [ThiI sulfur-carrier protein]-S-sulfanyl-L-cysteine + a uridine in tRNA + 2 reduced [2Fe-2S]-[ferredoxin] + ATP + H(+) = [ThiI sulfur-carrier protein]-L-cysteine + a 4-thiouridine in tRNA + 2 oxidized [2Fe-2S]-[ferredoxin] + AMP + diphosphate. The enzyme catalyses [ThiS sulfur-carrier protein]-C-terminal Gly-Gly-AMP + S-sulfanyl-L-cysteinyl-[cysteine desulfurase] + AH2 = [ThiS sulfur-carrier protein]-C-terminal-Gly-aminoethanethioate + L-cysteinyl-[cysteine desulfurase] + A + AMP + 2 H(+). Its pathway is cofactor biosynthesis; thiamine diphosphate biosynthesis. In terms of biological role, catalyzes the ATP-dependent transfer of a sulfur to tRNA to produce 4-thiouridine in position 8 of tRNAs, which functions as a near-UV photosensor. Also catalyzes the transfer of sulfur to the sulfur carrier protein ThiS, forming ThiS-thiocarboxylate. This is a step in the synthesis of thiazole, in the thiamine biosynthesis pathway. The sulfur is donated as persulfide by IscS. This chain is Probable tRNA sulfurtransferase, found in Macrococcus caseolyticus (strain JCSC5402) (Macrococcoides caseolyticum).